The chain runs to 310 residues: 2-dehydropantoate 2-reductase (310 aa).

NADP(+)-binding positions include 9 to 14 (GVGAIG) and Asn-100. Asn-100 is a binding site for substrate. Catalysis depends on Lys-184, which acts as the Proton donor. 3 residues coordinate substrate: Asn-188, Asn-192, and Ser-259. An NADP(+)-binding site is contributed by Glu-270.

The protein belongs to the ketopantoate reductase family.

The protein localises to the cytoplasm. It carries out the reaction (R)-pantoate + NADP(+) = 2-dehydropantoate + NADPH + H(+). Its pathway is cofactor biosynthesis; (R)-pantothenate biosynthesis; (R)-pantoate from 3-methyl-2-oxobutanoate: step 2/2. Functionally, catalyzes the NADPH-dependent reduction of ketopantoate into pantoic acid. In Aquifex aeolicus (strain VF5), this protein is 2-dehydropantoate 2-reductase.